Reading from the N-terminus, the 390-residue chain is Flavohemoprotein (390 aa).

Serine 2 bears the N-acetylserine mark. In terms of domain architecture, Globin spans 12-149 (PLTPTEINFL…LAQTLIDAEA (138 aa)). Histidine 96 is a binding site for heme b. Active-site charge relay system residues include tyrosine 106 and glutamate 148. The tract at residues 157 to 390 (WEEFKDFRVT…EFFGPTDPDC (234 aa)) is reductase. An FAD-binding FR-type domain is found at 158–263 (EEFKDFRVTK…HAPVGTMKYD (106 aa)). FAD-binding positions include tyrosine 196 and 214 to 217 (REYS). Residue 277 to 282 (GIGITP) participates in NADP(+) binding. 382–385 (FFGP) is a binding site for FAD.

The protein belongs to the globin family. Two-domain flavohemoproteins subfamily. It in the C-terminal section; belongs to the flavoprotein pyridine nucleotide cytochrome reductase family. FAD serves as cofactor. It depends on heme b as a cofactor.

Its subcellular location is the cytoplasm. The catalysed reaction is 2 nitric oxide + NADPH + 2 O2 = 2 nitrate + NADP(+) + H(+). The enzyme catalyses 2 nitric oxide + NADH + 2 O2 = 2 nitrate + NAD(+) + H(+). Functionally, is involved in NO detoxification in an aerobic process, termed nitric oxide dioxygenase (NOD) reaction that utilizes O(2) and NAD(P)H to convert NO to nitrate, which protects the fungus from various noxious nitrogen compounds. Therefore, plays a central role in the inducible response to nitrosative stress. Its function is as follows. In the presence of oxygen and NADH, it has NADH oxidase activity, which leads to the generation of superoxide and H(2)O(2). Under anaerobic conditions, it also exhibits nitric oxide reductase and FAD reductase activities. However, all these reactions are much lower than NOD activity. In Candida norvegensis (Yeast), this protein is Flavohemoprotein.